Reading from the N-terminus, the 258-residue chain is UPF0246 protein Pnuc_0753 (258 aa).

Belongs to the UPF0246 family.

This Polynucleobacter asymbioticus (strain DSM 18221 / CIP 109841 / QLW-P1DMWA-1) (Polynucleobacter necessarius subsp. asymbioticus) protein is UPF0246 protein Pnuc_0753.